Consider the following 396-residue polypeptide: Elongation factor Tu (396 aa).

One can recognise a tr-type G domain in the interval 10-206; it reads KPHVNIGTIG…AVDSYIPDPE (197 aa). The segment at 19-26 is G1; it reads GHVDHGKT. 19–26 is a binding site for GTP; sequence GHVDHGKT. Position 26 (Thr26) interacts with Mg(2+). Residues 60–64 are G2; it reads GITIA. Residues 81–84 form a G3 region; that stretch reads DCPG. GTP is bound by residues 81–85 and 136–139; these read DCPGH and NKAD. Residues 136–139 are G4; the sequence is NKAD. Residues 174-176 are G5; that stretch reads SAL.

Belongs to the TRAFAC class translation factor GTPase superfamily. Classic translation factor GTPase family. EF-Tu/EF-1A subfamily. In terms of assembly, monomer.

It localises to the cytoplasm. The catalysed reaction is GTP + H2O = GDP + phosphate + H(+). Functionally, GTP hydrolase that promotes the GTP-dependent binding of aminoacyl-tRNA to the A-site of ribosomes during protein biosynthesis. The protein is Elongation factor Tu of Pelobacter propionicus (strain DSM 2379 / NBRC 103807 / OttBd1).